We begin with the raw amino-acid sequence, 298 residues long: MGRVDPVSVVVDDGVGWSAWPAPAKLNLFLQITGRRVDGYHELQTVFRLLDWGDTIHLRVREDGQIHRIGESVTGVVEADDLVVRAAYLLKYATNVHLGADIFVEKRIPVGGGFGGGSSDAATVLLVLNALWHTRLDVAVLAALGLRLGADVPVFVHGCNAWAEGVGECLTPMILPGAAYLLLDPGVCVPTRELFLDPDLTRDASPATIGDFIAGTAFGNAFEPVLRRRESAVAGALDVLSEVGFARVTGSGSGCFVEFSTRDEAECALERLPYGLCAWVADGASRSPLLDVLKTMEF.

The active site involves K25. An ATP-binding site is contributed by 109–119 (PVGGGFGGGSS). The active site involves D151.

Belongs to the GHMP kinase family. IspE subfamily.

It catalyses the reaction 4-CDP-2-C-methyl-D-erythritol + ATP = 4-CDP-2-C-methyl-D-erythritol 2-phosphate + ADP + H(+). It functions in the pathway isoprenoid biosynthesis; isopentenyl diphosphate biosynthesis via DXP pathway; isopentenyl diphosphate from 1-deoxy-D-xylulose 5-phosphate: step 3/6. Its function is as follows. Catalyzes the phosphorylation of the position 2 hydroxy group of 4-diphosphocytidyl-2C-methyl-D-erythritol. This chain is 4-diphosphocytidyl-2-C-methyl-D-erythritol kinase, found in Xylella fastidiosa (strain 9a5c).